The following is a 545-amino-acid chain: CTP synthase (545 aa).

Residues 1–266 form an amidoligase domain region; the sequence is MTTNYIFVTG…DDYICKRFSL (266 aa). Position 14 (Ser-14) interacts with CTP. Residue Ser-14 participates in UTP binding. ATP-binding positions include 15-20 and Asp-72; that span reads SLGKGI. 2 residues coordinate Mg(2+): Asp-72 and Glu-140. CTP-binding positions include 147–149, 187–192, and Lys-223; these read DIE and KTKPTQ. UTP-binding positions include 187–192 and Lys-223; that span reads KTKPTQ. An ATP-binding site is contributed by 239–241; that stretch reads KDV. In terms of domain architecture, Glutamine amidotransferase type-1 spans 291-542; that stretch reads TIGMVGKYIE…VKAANEHQKR (252 aa). Gly-352 provides a ligand contact to L-glutamine. The Nucleophile; for glutamine hydrolysis role is filled by Cys-379. Residues 380-383, Glu-403, and Arg-470 contribute to the L-glutamine site; that span reads LGMQ. Catalysis depends on residues His-515 and Glu-517.

It belongs to the CTP synthase family. Homotetramer.

It carries out the reaction UTP + L-glutamine + ATP + H2O = CTP + L-glutamate + ADP + phosphate + 2 H(+). It catalyses the reaction L-glutamine + H2O = L-glutamate + NH4(+). The enzyme catalyses UTP + NH4(+) + ATP = CTP + ADP + phosphate + 2 H(+). The protein operates within pyrimidine metabolism; CTP biosynthesis via de novo pathway; CTP from UDP: step 2/2. Its activity is regulated as follows. Allosterically activated by GTP, when glutamine is the substrate; GTP has no effect on the reaction when ammonia is the substrate. The allosteric effector GTP functions by stabilizing the protein conformation that binds the tetrahedral intermediate(s) formed during glutamine hydrolysis. Inhibited by the product CTP, via allosteric rather than competitive inhibition. Catalyzes the ATP-dependent amination of UTP to CTP with either L-glutamine or ammonia as the source of nitrogen. Regulates intracellular CTP levels through interactions with the four ribonucleotide triphosphates. The sequence is that of CTP synthase from Salmonella newport (strain SL254).